The primary structure comprises 425 residues: High-affinity branched-chain amino acid transport system permease protein LivM (425 aa).

A run of 11 helical transmembrane segments spans residues 6–26 (IAMA…FMGV), 45–65 (WQWV…RPAF), 92–112 (FLVA…RGTV), 120–140 (IYII…LLVL), 145–165 (FYAI…LGFW), 167–187 (CLPI…FPVL), 191–211 (GDYL…LLLN), 260–280 (RVIF…FVIN), 311–331 (IKLT…TLFA), 353–373 (IVVL…ILLV), and 387–407 (MLML…GLLP).

The protein belongs to the binding-protein-dependent transport system permease family. LivHM subfamily.

Its subcellular location is the cell inner membrane. Functionally, part of the binding-protein-dependent transport system for branched-chain amino acids. Probably responsible for the translocation of the substrates across the membrane. The sequence is that of High-affinity branched-chain amino acid transport system permease protein LivM (livM) from Escherichia coli (strain K12).